A 256-amino-acid chain; its full sequence is NAD-dependent protein deacylase 4 (256 aa).

The Deacetylase sirtuin-type domain maps to Met1 to Gly250. NAD(+) is bound at residue Gly19–Trp39. Substrate-binding residues include Tyr64 and Arg67. Residue Gln98–Asp101 participates in NAD(+) binding. Residue His116 is the Proton acceptor of the active site. The Zn(2+) site is built by Cys124, Cys127, Cys152, and Cys155. NAD(+)-binding positions include Gly192–Ser194, Asn218–Val220, and Ala236.

It belongs to the sirtuin family. Class III subfamily. Requires Zn(2+) as cofactor.

Its subcellular location is the cytoplasm. The catalysed reaction is N(6)-acetyl-L-lysyl-[protein] + NAD(+) + H2O = 2''-O-acetyl-ADP-D-ribose + nicotinamide + L-lysyl-[protein]. It carries out the reaction N(6)-succinyl-L-lysyl-[protein] + NAD(+) + H2O = 2''-O-succinyl-ADP-D-ribose + nicotinamide + L-lysyl-[protein]. In terms of biological role, NAD-dependent lysine deacetylase and desuccinylase that specifically removes acetyl and succinyl groups on target proteins. Modulates the activities of several proteins which are inactive in their acylated form. This is NAD-dependent protein deacylase 4 from Pseudomonas syringae pv. tomato (strain ATCC BAA-871 / DC3000).